Reading from the N-terminus, the 83-residue chain is Small ribosomal subunit protein uS17 (83 aa).

The protein belongs to the universal ribosomal protein uS17 family. Part of the 30S ribosomal subunit.

Its function is as follows. One of the primary rRNA binding proteins, it binds specifically to the 5'-end of 16S ribosomal RNA. This is Small ribosomal subunit protein uS17 from Francisella philomiragia subsp. philomiragia (strain ATCC 25017 / CCUG 19701 / FSC 153 / O#319-036).